A 946-amino-acid polypeptide reads, in one-letter code: Glucoamylase 1 (946 aa).

The N-terminal stretch at 1–20 (MKLLSKVFVTALGLTSIVNA) is a signal peptide. Residues asparagine 51, asparagine 68, asparagine 97, asparagine 187, asparagine 244, asparagine 373, asparagine 393, asparagine 406, and asparagine 437 are each glycosylated (N-linked (GlcNAc...) asparagine). Residues aspartate 462 and glutamate 465 contribute to the active site. Residue asparagine 505 is glycosylated (N-linked (GlcNAc...) asparagine). Residues 517–532 (AATKTTTTTSSSTSTS) are compositionally biased toward low complexity. Positions 517–541 (AATKTTTTTSSSTSTSIDGKNTLAP) are disordered. Asparagine 570 is a glycosylation site (N-linked (GlcNAc...) asparagine). Aspartate 628 acts as the Proton donor in catalysis. 5 N-linked (GlcNAc...) asparagine glycosylation sites follow: asparagine 704, asparagine 772, asparagine 801, asparagine 895, and asparagine 912.

Belongs to the glycosyl hydrolase 31 family. The N-terminus is blocked.

The protein localises to the secreted. It is found in the cell wall. Its subcellular location is the membrane. It carries out the reaction Hydrolysis of terminal (1-&gt;4)-linked alpha-D-glucose residues successively from non-reducing ends of the chains with release of beta-D-glucose.. This chain is Glucoamylase 1 (GAM1), found in Candida albicans (strain SC5314 / ATCC MYA-2876) (Yeast).